Reading from the N-terminus, the 64-residue chain is Translation machinery-associated protein 7 homolog (64 aa).

The interval 1 to 64 (MSGREGGKKK…QGGIKKSGKK (64 aa)) is disordered. The stretch at 21–50 (EMDEDTAAFKAKQKEQQKALEAAKQKATKG) forms a coiled coil. The segment covering 32-44 (KQKEQQKALEAAK) has biased composition (basic and acidic residues).

The protein belongs to the TMA7 family.

The chain is Translation machinery-associated protein 7 homolog from Anopheles gambiae (African malaria mosquito).